Here is a 161-residue protein sequence, read N- to C-terminus: Small ribosomal subunit protein uS19 (161 aa).

Basic residues predominate over residues Met-1–Gln-19. The segment at Met-1–Arg-26 is disordered.

This sequence belongs to the universal ribosomal protein uS19 family.

Functionally, protein S19 forms a complex with S13 that binds strongly to the 16S ribosomal RNA. This Methanococcus maripaludis (strain C6 / ATCC BAA-1332) protein is Small ribosomal subunit protein uS19.